The following is a 1369-amino-acid chain: DNA-directed RNA polymerase subunit beta (1369 aa).

It belongs to the RNA polymerase beta chain family. In terms of assembly, the RNAP catalytic core consists of 2 alpha, 1 beta, 1 beta' and 1 omega subunit. When a sigma factor is associated with the core the holoenzyme is formed, which can initiate transcription.

It carries out the reaction RNA(n) + a ribonucleoside 5'-triphosphate = RNA(n+1) + diphosphate. In terms of biological role, DNA-dependent RNA polymerase catalyzes the transcription of DNA into RNA using the four ribonucleoside triphosphates as substrates. The chain is DNA-directed RNA polymerase subunit beta from Solidesulfovibrio magneticus (strain ATCC 700980 / DSM 13731 / RS-1) (Desulfovibrio magneticus).